Reading from the N-terminus, the 179-residue chain is Large ribosomal subunit protein uL6 (179 aa).

Belongs to the universal ribosomal protein uL6 family. In terms of assembly, part of the 50S ribosomal subunit.

Its function is as follows. This protein binds to the 23S rRNA, and is important in its secondary structure. It is located near the subunit interface in the base of the L7/L12 stalk, and near the tRNA binding site of the peptidyltransferase center. The protein is Large ribosomal subunit protein uL6 of Leptospira borgpetersenii serovar Hardjo-bovis (strain JB197).